The sequence spans 121 residues: Small ribosomal subunit protein uS13 (121 aa).

A disordered region spans residues 89–121 (MRHRRGLPVRGQHTKNNARTRKGKAVSIAGKKK).

The protein belongs to the universal ribosomal protein uS13 family. As to quaternary structure, part of the 30S ribosomal subunit. Forms a loose heterodimer with protein S19. Forms two bridges to the 50S subunit in the 70S ribosome.

Its function is as follows. Located at the top of the head of the 30S subunit, it contacts several helices of the 16S rRNA. In the 70S ribosome it contacts the 23S rRNA (bridge B1a) and protein L5 of the 50S subunit (bridge B1b), connecting the 2 subunits; these bridges are implicated in subunit movement. Contacts the tRNAs in the A and P-sites. The polypeptide is Small ribosomal subunit protein uS13 (Levilactobacillus brevis (strain ATCC 367 / BCRC 12310 / CIP 105137 / JCM 1170 / LMG 11437 / NCIMB 947 / NCTC 947) (Lactobacillus brevis)).